We begin with the raw amino-acid sequence, 338 residues long: Purple acid phosphatase 17 (338 aa).

An N-terminal signal peptide occupies residues 1-31 (MNSGRRSLMSATASLSLLLCIFTTFVVVSNG). Position 53 (aspartate 53) interacts with Fe cation. N-linked (GlcNAc...) asparagine glycosylation is present at asparagine 61. Aspartate 86 and tyrosine 89 together coordinate Fe cation. Aspartate 86 lines the Zn(2+) pocket. Positions 124 and 218 each coordinate Zn(2+). Catalysis depends on histidine 227, which acts as the Proton donor. Position 253 (histidine 253) interacts with Zn(2+). Substrate is bound at residue 253–255 (HDH). Histidine 255 is a binding site for Fe cation.

It belongs to the metallophosphoesterase superfamily. Purple acid phosphatase family. In terms of assembly, homodimer. Requires Fe cation as cofactor. Zn(2+) serves as cofactor. Expressed in roots, stems, leaves, flowers and siliques.

It is found in the secreted. The catalysed reaction is a phosphate monoester + H2O = an alcohol + phosphate. It catalyses the reaction 2 a phenolic donor + H2O2 = 2 a phenolic radical donor + 2 H2O. With respect to regulation, inhibited by phosphate and molybdate. Functionally, metallo-phosphoesterase involved in phosphate metabolism. Has a peroxidase activity. The chain is Purple acid phosphatase 17 (PAP17) from Arabidopsis thaliana (Mouse-ear cress).